The chain runs to 407 residues: GTPase Obg (407 aa).

The region spanning 1-159 is the Obg domain; the sequence is MKFVDEVSIR…RDLKLELKVL (159 aa). The disordered stretch occupies residues 127-149; the sequence is NTRFKSSTNRAPRQTTPGKPGDQ. The span at 129–143 shows a compositional bias: polar residues; the sequence is RFKSSTNRAPRQTTP. The OBG-type G domain occupies 160–333; it reads ADVGLLGLPN…LTRDIMRYLE (174 aa). GTP contacts are provided by residues 166 to 173, 191 to 195, 213 to 216, 283 to 286, and 314 to 316; these read GLPNAGKS, FTTLV, DIPG, NKCD, and SAI. Residues Ser-173 and Thr-193 each contribute to the Mg(2+) site. The segment at 376–407 is disordered; it reads SGVKSVHDIGDDDWDEEDVDDEDGPEIIYVRD. A compositionally biased stretch (acidic residues) spans 385–400; it reads GDDDWDEEDVDDEDGP.

Belongs to the TRAFAC class OBG-HflX-like GTPase superfamily. OBG GTPase family. In terms of assembly, monomer. The cofactor is Mg(2+).

The protein localises to the cytoplasm. Its function is as follows. An essential GTPase which binds GTP, GDP and possibly (p)ppGpp with moderate affinity, with high nucleotide exchange rates and a fairly low GTP hydrolysis rate. Plays a role in control of the cell cycle, stress response, ribosome biogenesis and in those bacteria that undergo differentiation, in morphogenesis control. In Pseudomonas savastanoi pv. phaseolicola (strain 1448A / Race 6) (Pseudomonas syringae pv. phaseolicola (strain 1448A / Race 6)), this protein is GTPase Obg.